The primary structure comprises 263 residues: 3-methyl-2-oxobutanoate hydroxymethyltransferase (263 aa).

Residues aspartate 44 and aspartate 83 each contribute to the Mg(2+) site. 3-methyl-2-oxobutanoate-binding positions include 44 to 45 (DS), aspartate 83, and lysine 112. Position 114 (glutamate 114) interacts with Mg(2+). The active-site Proton acceptor is glutamate 181.

The protein belongs to the PanB family. In terms of assembly, homodecamer; pentamer of dimers. Mg(2+) serves as cofactor.

It localises to the cytoplasm. The catalysed reaction is 3-methyl-2-oxobutanoate + (6R)-5,10-methylene-5,6,7,8-tetrahydrofolate + H2O = 2-dehydropantoate + (6S)-5,6,7,8-tetrahydrofolate. Its pathway is cofactor biosynthesis; (R)-pantothenate biosynthesis; (R)-pantoate from 3-methyl-2-oxobutanoate: step 1/2. Catalyzes the reversible reaction in which hydroxymethyl group from 5,10-methylenetetrahydrofolate is transferred onto alpha-ketoisovalerate to form ketopantoate. This chain is 3-methyl-2-oxobutanoate hydroxymethyltransferase, found in Sulfurimonas denitrificans (strain ATCC 33889 / DSM 1251) (Thiomicrospira denitrificans (strain ATCC 33889 / DSM 1251)).